The following is a 305-amino-acid chain: GTPase Era (305 aa).

Residues Arg13 to Glu181 form the Era-type G domain. The segment at Gly21–Ser28 is G1. Gly21–Ser28 lines the GTP pocket. The tract at residues Gln47 to His51 is G2. Residues Asp68–Gly71 form a G3 region. Residues Asp68 to Leu72 and Asn130 to Asp133 contribute to the GTP site. A G4 region spans residues Asn130 to Asp133. Residues Ile160–Ala162 are G5. The 85-residue stretch at Val204–Gly288 folds into the KH type-2 domain.

This sequence belongs to the TRAFAC class TrmE-Era-EngA-EngB-Septin-like GTPase superfamily. Era GTPase family. Monomer.

Its subcellular location is the cytoplasm. It localises to the cell inner membrane. An essential GTPase that binds both GDP and GTP, with rapid nucleotide exchange. Plays a role in 16S rRNA processing and 30S ribosomal subunit biogenesis and possibly also in cell cycle regulation and energy metabolism. The polypeptide is GTPase Era (Pseudomonas aeruginosa (strain LESB58)).